The sequence spans 447 residues: Trigger factor (447 aa).

The 86-residue stretch at 164–249 folds into the PPIase FKBP-type domain; sequence GNQVTFDFEG…VKLVEKSKLP (86 aa).

It belongs to the FKBP-type PPIase family. Tig subfamily.

It localises to the cytoplasm. The catalysed reaction is [protein]-peptidylproline (omega=180) = [protein]-peptidylproline (omega=0). Its function is as follows. Involved in protein export. Acts as a chaperone by maintaining the newly synthesized protein in an open conformation. Functions as a peptidyl-prolyl cis-trans isomerase. This Psychrobacter cryohalolentis (strain ATCC BAA-1226 / DSM 17306 / VKM B-2378 / K5) protein is Trigger factor.